The following is a 454-amino-acid chain: Bifunctional protein GlmU (454 aa).

The segment at 1–226 (MALNVVILAA…AIEVEGANNR (226 aa)) is pyrophosphorylase. UDP-N-acetyl-alpha-D-glucosamine is bound by residues 8 to 11 (LAAG), Lys22, Gln73, 78 to 79 (GT), 100 to 102 (YGD), Gly137, Glu151, Asn166, and Asn224. Asp102 is a Mg(2+) binding site. Asn224 lines the Mg(2+) pocket. Positions 227–247 (VQLAQLERAYQAREAEKLMIA) are linker. The tract at residues 248–454 (GANLRDPSRI…GWQRPVKIKK (207 aa)) is N-acetyltransferase. UDP-N-acetyl-alpha-D-glucosamine is bound by residues Arg330 and Lys348. The active-site Proton acceptor is His360. Positions 363 and 374 each coordinate UDP-N-acetyl-alpha-D-glucosamine. Acetyl-CoA contacts are provided by residues Ala377, 383–384 (NY), Ser402, Ala420, and Arg437.

It in the N-terminal section; belongs to the N-acetylglucosamine-1-phosphate uridyltransferase family. This sequence in the C-terminal section; belongs to the transferase hexapeptide repeat family. As to quaternary structure, homotrimer. The cofactor is Mg(2+).

The protein resides in the cytoplasm. It catalyses the reaction alpha-D-glucosamine 1-phosphate + acetyl-CoA = N-acetyl-alpha-D-glucosamine 1-phosphate + CoA + H(+). It carries out the reaction N-acetyl-alpha-D-glucosamine 1-phosphate + UTP + H(+) = UDP-N-acetyl-alpha-D-glucosamine + diphosphate. The protein operates within nucleotide-sugar biosynthesis; UDP-N-acetyl-alpha-D-glucosamine biosynthesis; N-acetyl-alpha-D-glucosamine 1-phosphate from alpha-D-glucosamine 6-phosphate (route II): step 2/2. Its pathway is nucleotide-sugar biosynthesis; UDP-N-acetyl-alpha-D-glucosamine biosynthesis; UDP-N-acetyl-alpha-D-glucosamine from N-acetyl-alpha-D-glucosamine 1-phosphate: step 1/1. It participates in bacterial outer membrane biogenesis; LPS lipid A biosynthesis. Functionally, catalyzes the last two sequential reactions in the de novo biosynthetic pathway for UDP-N-acetylglucosamine (UDP-GlcNAc). The C-terminal domain catalyzes the transfer of acetyl group from acetyl coenzyme A to glucosamine-1-phosphate (GlcN-1-P) to produce N-acetylglucosamine-1-phosphate (GlcNAc-1-P), which is converted into UDP-GlcNAc by the transfer of uridine 5-monophosphate (from uridine 5-triphosphate), a reaction catalyzed by the N-terminal domain. The polypeptide is Bifunctional protein GlmU (Shewanella oneidensis (strain ATCC 700550 / JCM 31522 / CIP 106686 / LMG 19005 / NCIMB 14063 / MR-1)).